The following is a 181-amino-acid chain: Oligoribonuclease (181 aa).

In terms of domain architecture, Exonuclease spans 8–171 (LIWIDLEMTG…DDIRESIAEL (164 aa)). Residue tyrosine 129 is part of the active site.

The protein belongs to the oligoribonuclease family.

It localises to the cytoplasm. Its function is as follows. 3'-to-5' exoribonuclease specific for small oligoribonucleotides. This Vibrio vulnificus (strain CMCP6) protein is Oligoribonuclease.